We begin with the raw amino-acid sequence, 921 residues long: Translation initiation factor IF-2 (921 aa).

A disordered region spans residues Met1 to Leu296. A compositionally biased stretch (low complexity) spans Arg80–Ser89. The span at Ala116 to Ala182 shows a compositional bias: basic and acidic residues. Over residues Pro183 to Gly257 the composition is skewed to low complexity. The tr-type G domain maps to Pro417 to Asp586. Residues Gly426–Thr433 are G1. Gly426–Thr433 is a binding site for GTP. Residues Gly451–His455 are G2. A G3 region spans residues Asp474–Gly477. Residues Asp474–His478 and Asn528–Asp531 contribute to the GTP site. A G4 region spans residues Asn528 to Asp531. Residues Ser564 to Lys566 are G5.

It belongs to the TRAFAC class translation factor GTPase superfamily. Classic translation factor GTPase family. IF-2 subfamily.

Its subcellular location is the cytoplasm. Its function is as follows. One of the essential components for the initiation of protein synthesis. Protects formylmethionyl-tRNA from spontaneous hydrolysis and promotes its binding to the 30S ribosomal subunits. Also involved in the hydrolysis of GTP during the formation of the 70S ribosomal complex. This is Translation initiation factor IF-2 from Bradyrhizobium sp. (strain BTAi1 / ATCC BAA-1182).